Consider the following 1163-residue polypeptide: AF4/FMR2 family member 4 (1163 aa).

Positions 1 to 19 (MNREDRNVLRMKERERRNQ) are enriched in basic and acidic residues. Disordered regions lie at residues 1-48 (MNRE…EDKL), 76-312 (AIPK…ASGD), 324-904 (THSW…PRRT), and 1034-1073 (NSYN…SSGA). Residues 115–128 (PSTSQSQKRSSGLQ) show a composition bias toward polar residues. Ser-120 carries the phosphoserine modification. 2 stretches are compositionally biased toward low complexity: residues 129 to 148 (SGHS…NSSG) and 177 to 194 (RSSS…NSSH). Basic and acidic residues predominate over residues 198–217 (HGNDHHSKEHQRSKSPRDPD). A Phosphoserine modification is found at Ser-212. 3 stretches are compositionally biased toward polar residues: residues 227 to 251 (PFSS…SMLQ), 273 to 285 (EHYS…NSMT), and 350 to 375 (KESQ…NGHQ). Residues Ser-387, Ser-388, Ser-389, and Ser-392 each carry the phosphoserine modification. Residues 403–412 (PRSTPGSNSE) show a composition bias toward polar residues. Residues 413-429 (PSHHNSEGADNSRDDSS) show a composition bias toward basic and acidic residues. Over residues 430 to 462 (SHSGSESSSGSDSESESSSSDSEANEPSQSASP) the composition is skewed to low complexity. A phosphoserine mark is found at Ser-487, Ser-490, and Ser-491. Polar residues-rich tracts occupy residues 488–501 (PASS…SSQG), 510–528 (GTGN…SSAT), and 549–560 (SPAQSDSTTQRR). Ser-549 carries the phosphoserine modification. Over residues 568–586 (KKAEKAAAEEPRGGLKIES) the composition is skewed to basic and acidic residues. Lys-583 is covalently cross-linked (Glycyl lysine isopeptide (Lys-Gly) (interchain with G-Cter in SUMO2)). Positions 599–612 (SRHKAATKGSRKPN) are enriched in basic residues. Basic and acidic residues predominate over residues 613–627 (IKKESKSSPRPTAEK). Residue Ser-671 is modified to Phosphoserine. Thr-674 carries the post-translational modification Phosphothreonine. Residues Ser-680, Ser-694, Ser-703, and Ser-706 each carry the phosphoserine modification. A Phosphotyrosine modification is found at Tyr-712. 3 stretches are compositionally biased toward basic and acidic residues: residues 730 to 761 (PYKE…EKVS), 769 to 789 (KNED…DKNS), and 799 to 811 (ESSK…EKDL). Residue Ser-814 is modified to Phosphoserine. Lys-822 bears the N6-acetyllysine mark. Phosphoserine occurs at positions 836, 1043, 1055, 1058, and 1062. A compositionally biased stretch (low complexity) spans 836–862 (SQSSSLKSSSNSNKETSGSSKNSSSTS). The segment covering 1062 to 1073 (SPGNSGNYSSGA) has biased composition (low complexity).

Belongs to the AF4 family. In terms of assembly, component of the super elongation complex (SEC), at least composed of EAF1, EAF2, CDK9, MLLT3/AF9, AFF (AFF1 or AFF4), the P-TEFb complex and ELL (ELL, ELL2 or ELL3). Interacts with ELL3; the interaction is direct. Interacts with ELL2; the interaction is direct and leads to stabilize ELL2 and prevent ELL2 ubiquitination and degradation. Dephosphorylated at Ser-549 by the PNUTS-PP1 complex, promoting RNA polymerase II transcription pause-release. As to expression, ubiquitously expressed. Strongly expressed in heart, placenta, skeletal muscle, pancreas and to a lower extent in brain.

It is found in the nucleus. Its subcellular location is the chromosome. Functionally, key component of the super elongation complex (SEC), a complex required to increase the catalytic rate of RNA polymerase II transcription by suppressing transient pausing by the polymerase at multiple sites along the DNA. In the SEC complex, AFF4 acts as a central scaffold that recruits other factors through direct interactions with ELL proteins (ELL, ELL2 or ELL3) and the P-TEFb complex. In case of infection by HIV-1 virus, the SEC complex is recruited by the viral Tat protein to stimulate viral gene expression. This is AF4/FMR2 family member 4 (AFF4) from Homo sapiens (Human).